The chain runs to 1567 residues: ABC multidrug transporter MDR1 (1567 aa).

Over residues 1–11 (MASQPPQPPSG) the composition is skewed to pro residues. The tract at residues 1–37 (MASQPPQPPSGQPDTQYEEYQSEVITETTNRPTPAAD) is disordered. Polar residues predominate over residues 22 to 32 (SEVITETTNRP). N-linked (GlcNAc...) asparagine glycosylation is found at Asn149, Asn157, and Asn356. Residues 167–432 (VQYQDTFLSP…FEEMGWYCPP (266 aa)) enclose the ABC transporter 1 domain. Transmembrane regions (helical) follow at residues 543–563 (STIA…SLFF), 571–591 (GFFA…LMSI), 636–656 (IPIK…LGGL), 661–681 (AKFF…SAIF), 691–711 (IPQA…YTGF), and 798–818 (LGIL…VSEL). 3 N-linked (GlcNAc...) asparagine glycosylation sites follow: Asn819, Asn895, and Asn912. Residues 891 to 1134 (FTWRNVTYDI…LLNYFETHGA (244 aa)) enclose the ABC transporter 2 domain. 927–934 (GVSGAGKT) is a binding site for ATP. Residues 1172-1202 (ESRHVQQELDRIQSETSKRNEGHGQSAEKEP) are disordered. The helical transmembrane segment at 1231–1251 (IWGKLLLGLTSALFIGFSFFL) threads the bilayer. Asn1253 is a glycosylation site (N-linked (GlcNAc...) asparagine). 5 helical membrane passes run 1257–1277 (AGLQ…SSLV), 1305–1325 (VFLL…GIIA), 1345–1365 (ILLL…QMII), 1372–1392 (ETAG…NGVL), and 1498–1518 (GIGW…YYLI).

This sequence belongs to the ABC transporter superfamily. ABCG family. PDR (TC 3.A.1.205) subfamily.

Its subcellular location is the cell membrane. It carries out the reaction voriconazole(in) + ATP + H2O = voriconazole(out) + ADP + phosphate + H(+). The catalysed reaction is fluconazole(in) + ATP + H2O = fluconazole(out) + ADP + phosphate + H(+). The enzyme catalyses (R)-miconazole(in) + ATP + H2O = (R)-miconazole(out) + ADP + phosphate + H(+). It catalyses the reaction (S)-miconazole(in) + ATP + H2O = (S)-miconazole(out) + ADP + phosphate + H(+). In terms of biological role, pleiotropic ABC efflux transporter that may be involved in the modulation susceptibility to a wide range of unrelated cytotoxic compounds. The chain is ABC multidrug transporter MDR1 from Trichophyton tonsurans (strain CBS 112818) (Scalp ringworm fungus).